Here is a 130-residue protein sequence, read N- to C-terminus: MATKTAARVRKKVKKNVAEGIAHIHASFNNTIVTITDRQGNALSWATAGGAGFKGSRKSTPFAAQVAAENAGKMAQEYGVKNLEVRIKGPGPGRESTVRALNALGFKIVAISDVTPIPHNGCRPSKKRRI.

The protein belongs to the universal ribosomal protein uS11 family. In terms of assembly, part of the 30S ribosomal subunit. Interacts with proteins S7 and S18. Binds to IF-3.

In terms of biological role, located on the platform of the 30S subunit, it bridges several disparate RNA helices of the 16S rRNA. Forms part of the Shine-Dalgarno cleft in the 70S ribosome. The chain is Small ribosomal subunit protein uS11 from Thiobacillus denitrificans (strain ATCC 25259 / T1).